Reading from the N-terminus, the 1755-residue chain is Transposon Ty1-DR5 Gag-Pol polyprotein (1755 aa).

Polar residues-rich tracts occupy residues Met-1–Pro-10, Thr-48–Ser-60, and Gln-127–Phe-152. Disordered regions lie at residues Met-1–Gln-93, Pro-126–Pro-173, and Gly-352–Thr-421. Residues Thr-153–Thr-165 show a composition bias toward low complexity. Positions Asn-299–His-401 are RNA-binding. Residues Asn-402–Ser-418 show a composition bias toward low complexity. Catalysis depends on Asp-461, which acts as the For protease activity; shared with dimeric partner. The tract at residues Asn-583–Cys-640 is integrase-type zinc finger-like. The Integrase catalytic domain occupies Asn-660–Pro-835. Residues Asp-671 and Asp-736 each contribute to the Mg(2+) site. Disordered regions lie at residues Ser-956–Lys-1087, Arg-1092–Pro-1111, and Asp-1130–Thr-1187. Over residues Ser-960–Thr-969 the composition is skewed to low complexity. The span at Ser-1005–Thr-1015 shows a compositional bias: polar residues. Residues Glu-1038–Ser-1053 are compositionally biased toward basic and acidic residues. 2 stretches are compositionally biased toward polar residues: residues Tyr-1054–Asp-1082 and Pro-1101–Pro-1111. The Bipartite nuclear localization signal signature appears at Lys-1178–Arg-1212. The region spanning Asn-1338–Gln-1476 is the Reverse transcriptase Ty1/copia-type domain. Residues Asp-1346, Asp-1427, Asp-1428, Asp-1610, Glu-1652, and Asp-1685 each coordinate Mg(2+). One can recognise an RNase H Ty1/copia-type domain in the interval Asp-1610–Lys-1752.

In terms of assembly, the capsid protein forms a homotrimer, from which the VLPs are assembled. The protease is a homodimer, whose active site consists of two apposed aspartic acid residues. Initially, virus-like particles (VLPs) are composed of the structural unprocessed proteins Gag and Gag-Pol, and also contain the host initiator methionine tRNA (tRNA(i)-Met) which serves as a primer for minus-strand DNA synthesis, and a dimer of genomic Ty RNA. Processing of the polyproteins occurs within the particle and proceeds by an ordered pathway, called maturation. First, the protease (PR) is released by autocatalytic cleavage of the Gag-Pol polyprotein yielding capsid protein p45 and a Pol-p154 precursor protein. This cleavage is a prerequisite for subsequent processing of Pol-p154 at the remaining sites to release the mature structural and catalytic proteins. Maturation takes place prior to the RT reaction and is required to produce transposition-competent VLPs.

The protein localises to the cytoplasm. Its subcellular location is the nucleus. The enzyme catalyses DNA(n) + a 2'-deoxyribonucleoside 5'-triphosphate = DNA(n+1) + diphosphate. The catalysed reaction is Endonucleolytic cleavage to 5'-phosphomonoester.. In terms of biological role, capsid protein (CA) is the structural component of the virus-like particle (VLP), forming the shell that encapsulates the retrotransposons dimeric RNA genome. The particles are assembled from trimer-clustered units and there are holes in the capsid shells that allow for the diffusion of macromolecules. CA also has nucleocapsid-like chaperone activity, promoting primer tRNA(i)-Met annealing to the multipartite primer-binding site (PBS), dimerization of Ty1 RNA and initiation of reverse transcription. The aspartyl protease (PR) mediates the proteolytic cleavages of the Gag and Gag-Pol polyproteins after assembly of the VLP. Its function is as follows. Reverse transcriptase/ribonuclease H (RT) is a multifunctional enzyme that catalyzes the conversion of the retro-elements RNA genome into dsDNA within the VLP. The enzyme displays a DNA polymerase activity that can copy either DNA or RNA templates, and a ribonuclease H (RNase H) activity that cleaves the RNA strand of RNA-DNA heteroduplexes during plus-strand synthesis and hydrolyzes RNA primers. The conversion leads to a linear dsDNA copy of the retrotransposon that includes long terminal repeats (LTRs) at both ends. Functionally, integrase (IN) targets the VLP to the nucleus, where a subparticle preintegration complex (PIC) containing at least integrase and the newly synthesized dsDNA copy of the retrotransposon must transit the nuclear membrane. Once in the nucleus, integrase performs the integration of the dsDNA into the host genome. The polypeptide is Transposon Ty1-DR5 Gag-Pol polyprotein (TY1B-DR5) (Saccharomyces cerevisiae (strain ATCC 204508 / S288c) (Baker's yeast)).